The following is a 244-amino-acid chain: 6-carboxyhexanoate--CoA ligase (244 aa).

It belongs to the BioW family. In terms of assembly, homodimer. It depends on Mg(2+) as a cofactor.

The enzyme catalyses heptanedioate + ATP + CoA = 6-carboxyhexanoyl-CoA + AMP + diphosphate. Its pathway is metabolic intermediate metabolism; pimeloyl-CoA biosynthesis; pimeloyl-CoA from pimelate: step 1/1. Its function is as follows. Catalyzes the transformation of pimelate into pimeloyl-CoA with concomitant hydrolysis of ATP to AMP. This Methanococcus maripaludis (strain C6 / ATCC BAA-1332) protein is 6-carboxyhexanoate--CoA ligase.